Consider the following 463-residue polypeptide: Argininosuccinate lyase (463 aa).

Belongs to the lyase 1 family. Argininosuccinate lyase subfamily.

The protein resides in the cytoplasm. The enzyme catalyses 2-(N(omega)-L-arginino)succinate = fumarate + L-arginine. The protein operates within amino-acid biosynthesis; L-arginine biosynthesis; L-arginine from L-ornithine and carbamoyl phosphate: step 3/3. The chain is Argininosuccinate lyase from Streptococcus pneumoniae (strain 70585).